Consider the following 313-residue polypeptide: Solute carrier family 35 member E3 (313 aa).

Transmembrane regions (helical) follow at residues glycine 17–valine 37, glycine 40–isoleucine 60, leucine 77–asparagine 97, phenylalanine 126–leucine 143, phenylalanine 153–valine 173, leucine 187–phenylalanine 206, leucine 225–isoleucine 245, threonine 252–phenylalanine 272, and proline 275–threonine 295.

This sequence belongs to the TPT transporter family. SLC35E subfamily.

Its subcellular location is the membrane. In terms of biological role, putative transporter. This chain is Solute carrier family 35 member E3 (SLC35E3), found in Homo sapiens (Human).